Here is a 241-residue protein sequence, read N- to C-terminus: Sec-independent protein translocase protein TatC (241 aa).

A run of 6 helical transmembrane segments spans residues 27-47, 76-96, 122-142, 161-181, 193-213, and 217-237; these read LIIV…FSAG, LTMC…YEAF, FVAG…SIVI, IVTN…IIVL, LVKG…FFSP, and LFSQ…SMVL.

This sequence belongs to the TatC family. As to quaternary structure, forms a complex with TatA.

It is found in the cell membrane. Its function is as follows. Part of the twin-arginine translocation (Tat) system that transports large folded proteins containing a characteristic twin-arginine motif in their signal peptide across membranes. The chain is Sec-independent protein translocase protein TatC from Methanocella arvoryzae (strain DSM 22066 / NBRC 105507 / MRE50).